Reading from the N-terminus, the 376-residue chain is Carbamoyl phosphate synthase small chain (376 aa).

Positions 1–183 (MSKAVLVLED…PDGPPGVSRF (183 aa)) are CPSase. Positions 46, 232, and 234 each coordinate L-glutamine. Residues 184 to 376 (TVAALDLGIK…FVELMAGEGR (193 aa)) enclose the Glutamine amidotransferase type-1 domain. Cys-260 acts as the Nucleophile in catalysis. Residues Phe-261, Gln-264, Asn-302, Gly-304, and Phe-305 each contribute to the L-glutamine site. Residues His-350 and Glu-352 contribute to the active site.

The protein belongs to the CarA family. Composed of two chains; the small (or glutamine) chain promotes the hydrolysis of glutamine to ammonia, which is used by the large (or ammonia) chain to synthesize carbamoyl phosphate. Tetramer of heterodimers (alpha,beta)4.

It carries out the reaction hydrogencarbonate + L-glutamine + 2 ATP + H2O = carbamoyl phosphate + L-glutamate + 2 ADP + phosphate + 2 H(+). The catalysed reaction is L-glutamine + H2O = L-glutamate + NH4(+). It functions in the pathway amino-acid biosynthesis; L-arginine biosynthesis; carbamoyl phosphate from bicarbonate: step 1/1. Its pathway is pyrimidine metabolism; UMP biosynthesis via de novo pathway; (S)-dihydroorotate from bicarbonate: step 1/3. Small subunit of the glutamine-dependent carbamoyl phosphate synthetase (CPSase). CPSase catalyzes the formation of carbamoyl phosphate from the ammonia moiety of glutamine, carbonate, and phosphate donated by ATP, constituting the first step of 2 biosynthetic pathways, one leading to arginine and/or urea and the other to pyrimidine nucleotides. The small subunit (glutamine amidotransferase) binds and cleaves glutamine to supply the large subunit with the substrate ammonia. The protein is Carbamoyl phosphate synthase small chain of Mycobacterium bovis (strain ATCC BAA-935 / AF2122/97).